Consider the following 241-residue polypeptide: Eukaryotic translation initiation factor 6 (241 aa).

Belongs to the eIF-6 family. Monomer. Associates with the 60S ribosomal subunit.

The protein localises to the cytoplasm. Its subcellular location is the nucleus. It is found in the nucleolus. In terms of biological role, binds to the 60S ribosomal subunit and prevents its association with the 40S ribosomal subunit to form the 80S initiation complex in the cytoplasm. Is also involved in ribosome biogenesis. Associates with pre-60S subunits in the nucleus and is involved in its nuclear export. The sequence is that of Eukaryotic translation initiation factor 6 from Encephalitozoon cuniculi (strain GB-M1) (Microsporidian parasite).